The primary structure comprises 107 residues: ATP-dependent Clp protease adapter protein ClpS (107 aa).

Residues 1–12 (MSGDKDFDKDSD) show a composition bias toward basic and acidic residues. The interval 1 to 21 (MSGDKDFDKDSDVTVITRTTP) is disordered.

The protein belongs to the ClpS family. In terms of assembly, binds to the N-terminal domain of the chaperone ClpA.

Its function is as follows. Involved in the modulation of the specificity of the ClpAP-mediated ATP-dependent protein degradation. The chain is ATP-dependent Clp protease adapter protein ClpS from Zymomonas mobilis subsp. mobilis (strain ATCC 31821 / ZM4 / CP4).